The primary structure comprises 87 residues: UPF0175 protein AF_0597 (87 aa).

It belongs to the UPF0175 family.

The polypeptide is UPF0175 protein AF_0597 (Archaeoglobus fulgidus (strain ATCC 49558 / DSM 4304 / JCM 9628 / NBRC 100126 / VC-16)).